The following is a 33-amino-acid chain: NAD-reducing hydrogenase HoxS subunit gamma (33 aa).

A 2Fe-2S ferredoxin-type domain is found at 1–33; the sequence is SIEIEIDGVTVTTEESRTLVDVAAEAGVYIPTL.

Belongs to the complex I 75 kDa subunit family. As to quaternary structure, tetramer of an alpha and a gamma subunits (flavin-containing dimer), and a delta and a nickel-containing beta subunits (hydrogenase dimer). [4Fe-4S] cluster is required as a cofactor.

It localises to the cytoplasm. It carries out the reaction H2 + NAD(+) = NADH + H(+). Its function is as follows. Subunits alpha and gamma of HoxS constitute an NADH--oxidoreductase. This is NAD-reducing hydrogenase HoxS subunit gamma (hoxU) from Rhodococcus opacus (Nocardia opaca).